The sequence spans 189 residues: MFDLKYGRPLNFKRWLDDHADKLKPPVGNQQIWQDSDMMVTVVGGPNERSDFHDDPIEELFYQFKGNAYLLLWEDGRYERVDLREGDMLLLPPHTLHSPQRPEADSRCLVVERKRPQGQNDAFQWSCASCGTIVQRHEVTLQSIVADLPPLYEKFYASSEDARRCPGCGEIHPGRDFQAWHRTLARHSS.

Arg-49 contacts O2. Fe cation contacts are provided by His-53, Glu-59, and His-97. Glu-59 is a substrate binding site. Residues Arg-101 and Glu-112 each contribute to the substrate site. Cys-127, Cys-130, Cys-165, and Cys-168 together coordinate Fe cation.

This sequence belongs to the 3-HAO family. Homodimer. The cofactor is Fe(2+).

The catalysed reaction is 3-hydroxyanthranilate + O2 = (2Z,4Z)-2-amino-3-carboxymuconate 6-semialdehyde. It participates in cofactor biosynthesis; NAD(+) biosynthesis; quinolinate from L-kynurenine: step 3/3. Its function is as follows. Catalyzes the oxidative ring opening of 3-hydroxyanthranilate to 2-amino-3-carboxymuconate semialdehyde, which spontaneously cyclizes to quinolinate. In Cupriavidus pinatubonensis (strain JMP 134 / LMG 1197) (Cupriavidus necator (strain JMP 134)), this protein is 3-hydroxyanthranilate 3,4-dioxygenase.